The following is a 703-amino-acid chain: DNA ligase (703 aa).

The tract at residues 1–20 is disordered; that stretch reads MNDNLDLFSGAAPAAPESGA. Positions 9-20 are enriched in low complexity; it reads SGAAPAAPESGA. Residues 53–57, 102–103, and E139 contribute to the NAD(+) site; these read DGEYD and SI. The active-site N6-AMP-lysine intermediate is the K141. NAD(+) contacts are provided by R162, E200, K321, and K345. Zn(2+) contacts are provided by C439, C442, C457, and C463. Positions 622-703 constitute a BRCT domain; that stretch reads QTAQPLAGMT…MLALLAGGDR (82 aa).

This sequence belongs to the NAD-dependent DNA ligase family. LigA subfamily. It depends on Mg(2+) as a cofactor. The cofactor is Mn(2+).

It catalyses the reaction NAD(+) + (deoxyribonucleotide)n-3'-hydroxyl + 5'-phospho-(deoxyribonucleotide)m = (deoxyribonucleotide)n+m + AMP + beta-nicotinamide D-nucleotide.. Functionally, DNA ligase that catalyzes the formation of phosphodiester linkages between 5'-phosphoryl and 3'-hydroxyl groups in double-stranded DNA using NAD as a coenzyme and as the energy source for the reaction. It is essential for DNA replication and repair of damaged DNA. The chain is DNA ligase from Delftia acidovorans (strain DSM 14801 / SPH-1).